The sequence spans 256 residues: uncharacterized protein (256 aa).

A disordered region spans residues 211-256 (RKLQASVTTTPPKRCKLADRPAQTTQDTPRAPQPAPVRAQRPLFTL). Residues 246 to 256 (PVRAQRPLFTL) are compositionally biased toward low complexity.

This is an uncharacterized protein from Orgyia pseudotsugata (Douglas-fir tussock moth).